The sequence spans 188 residues: GTP cyclohydrolase 1 (188 aa).

Zn(2+) is bound by residues Cys-73, His-76, and Cys-144.

The protein belongs to the GTP cyclohydrolase I family. Homomer.

It catalyses the reaction GTP + H2O = 7,8-dihydroneopterin 3'-triphosphate + formate + H(+). It functions in the pathway cofactor biosynthesis; 7,8-dihydroneopterin triphosphate biosynthesis; 7,8-dihydroneopterin triphosphate from GTP: step 1/1. The polypeptide is GTP cyclohydrolase 1 (Caldivirga maquilingensis (strain ATCC 700844 / DSM 13496 / JCM 10307 / IC-167)).